Reading from the N-terminus, the 169-residue chain is Protein pid-1 (169 aa).

Residues 137–151 (SGSPRITPQKHTPVS) show a composition bias toward polar residues. A disordered region spans residues 137 to 169 (SGSPRITPQKHTPVSANHKPARSIFDDIPSNIA).

In terms of assembly, component of the pid-1 variant of the PETISCO complex (also called the pid-3, erh-2, tofu-6, and ife-3 small RNA complex) containing at least pid-1, tofu-6, ife-3, pid-3, and erh-2, which is required for the biogenesis of a class of 21 nucleotide PIWI-interacting RNAs (piRNAs) that possess a uracil residue at the 5'-end (also called 21U-RNAs). Within the complex interacts with pid-3; the interaction is direct. Within the complex interacts with erh-2. Within the complex interacts with tofu-6. As to expression, expressed predominantly in the germline (at protein level).

Its subcellular location is the cytoplasm. The protein resides in the nucleus. The protein localises to the perinuclear region. Functionally, component of the pid-1 variant of the PETISCO complex which is required for the biogenesis of a class of 21 nucleotide PIWI-interacting RNAs (piRNAs) that possess a uracil residue at the 5'-end (also called 21U-RNAs). Within the complex acts as an adapter which binds to the complex via erh-2. Involved in the biogenesis of 21U-RNAs which guide the piwi protein prg-1 to its DNA targets for silencing. Plays a role in small RNA-directed transgenerational epigenetic inheritance. This is Protein pid-1 from Caenorhabditis elegans.